The primary structure comprises 170 residues: Cyclic pyranopterin monophosphate synthase (170 aa).

The disordered stretch occupies residues M1 to S25. Substrate-binding positions include L78–H80 and M116–E117. The active site involves D131.

This sequence belongs to the MoaC family. As to quaternary structure, homohexamer; trimer of dimers.

The enzyme catalyses (8S)-3',8-cyclo-7,8-dihydroguanosine 5'-triphosphate = cyclic pyranopterin phosphate + diphosphate. Its pathway is cofactor biosynthesis; molybdopterin biosynthesis. In terms of biological role, catalyzes the conversion of (8S)-3',8-cyclo-7,8-dihydroguanosine 5'-triphosphate to cyclic pyranopterin monophosphate (cPMP). The protein is Cyclic pyranopterin monophosphate synthase of Salinibacter ruber (strain DSM 13855 / M31).